The primary structure comprises 263 residues: MENKNVIQKMREKTPLIHCITNYVTINDCANILLSFGASPAMCEAYDEVYDFVSISSALYINLGTLTKEQETAAVLASISAKNHNVPVVIDPVGCPAIKRKVEVINRIAEVGRIDIIKGNIGEIKFLAGMDSETRGVDSLDNGENALDACTQLAKKYNCIVAATGQKDFVSDGKRGSVIKNGTEMLTKVTGAGCMLGALCAATCANFEDKLVSTTAAILSMNIAGEKAYEKAQLPGSFRIALIDNIYMISDKEIWERGNVEWK.

Met42 lines the substrate pocket. 2 residues coordinate ATP: Lys118 and Thr164. Gly191 provides a ligand contact to substrate.

This sequence belongs to the Thz kinase family. It depends on Mg(2+) as a cofactor.

It catalyses the reaction 5-(2-hydroxyethyl)-4-methylthiazole + ATP = 4-methyl-5-(2-phosphooxyethyl)-thiazole + ADP + H(+). It functions in the pathway cofactor biosynthesis; thiamine diphosphate biosynthesis; 4-methyl-5-(2-phosphoethyl)-thiazole from 5-(2-hydroxyethyl)-4-methylthiazole: step 1/1. Its function is as follows. Catalyzes the phosphorylation of the hydroxyl group of 4-methyl-5-beta-hydroxyethylthiazole (THZ). The chain is Hydroxyethylthiazole kinase 1 from Clostridium botulinum (strain Kyoto / Type A2).